Here is a 653-residue protein sequence, read N- to C-terminus: Leucine-rich repeat-containing protein 4 (653 aa).

An N-terminal signal peptide occupies residues 1–38 (MKLLWQVTVHHHTWNAILLPFVYLTAQVWILCAAIAAA). Positions 39 to 75 (ASAGPQNCPSVCSCSNQFSKVVCTRRGLSEVPQGIPS) constitute an LRRNT domain. Residues 39–527 (ASAGPQNCPS…SLDEVMKTTK (489 aa)) lie on the Extracellular side of the membrane. 2 disulfides stabilise this stretch: cysteine 46-cysteine 52 and cysteine 50-cysteine 61. LRR repeat units follow at residues 76 to 97 (NTRY…TFRH), 100 to 121 (HLEV…AFNG), 124 to 145 (SLNT…AFEY), 148 to 169 (KLRE…AFNR), 172 to 194 (SLMR…AFEG), 197 to 218 (NLKY…TPLV), 219 to 240 (GLEE…SFHG), 243 to 264 (SLKK…AFDG), and 267 to 288 (SLVE…LFTP). 9 N-linked (GlcNAc...) asparagine glycosylation sites follow: asparagine 277, asparagine 322, asparagine 363, asparagine 388, asparagine 410, asparagine 434, asparagine 440, asparagine 447, and asparagine 450. An LRRCT domain is found at 300 to 352 (NPWNCDCDILWLAWWLREYIPTNSTCCGRCHAPMHMRGRYLVEVDQASFQCSA). 2 disulfides stabilise this stretch: cysteine 304-cysteine 329 and cysteine 306-cysteine 350. The region spanning 353–442 (PFIMDAPRDL…SNASAYLNVS (90 aa)) is the Ig-like domain. A disulfide bridge links cysteine 374 with cysteine 424. A helical membrane pass occupies residues 528–548 (IIIGCFVAVTLLAAAMLIVFY). Residues 549–653 (KLRKRHQQRS…TKDKVQETQI (105 aa)) lie on the Cytoplasmic side of the membrane.

Interacts with DLG4. Interacts (via LRR repeats) with NTNG2. Forms a complex with DLG4 and with NMDA receptors. N-glycosylated. As to expression, specifically expressed in brain.

It is found in the membrane. The protein resides in the postsynaptic cell membrane. Its function is as follows. Synaptic adhesion protein. Regulates the formation of exitatory synapses through the recruitment of pre-and-postsynaptic proteins. Organize the lamina/pathway-specific differentiation of dendrites. Plays an important role for auditory synaptic responses. Involved in the suppression of glioma. This Homo sapiens (Human) protein is Leucine-rich repeat-containing protein 4 (LRRC4).